The following is a 389-amino-acid chain: S-adenosylmethionine synthase (389 aa).

Position 17 (histidine 17) interacts with ATP. Aspartate 19 is a binding site for Mg(2+). Glutamate 45 is a K(+) binding site. Positions 58 and 101 each coordinate L-methionine. The tract at residues 101–111 (QSPDISQGVTE) is flexible loop. Residues 168 to 170 (DSK), 234 to 235 (RF), aspartate 243, 249 to 250 (RK), alanine 266, and lysine 270 contribute to the ATP site. Residue aspartate 243 coordinates L-methionine. Residue lysine 274 coordinates L-methionine.

This sequence belongs to the AdoMet synthase family. As to quaternary structure, homotetramer; dimer of dimers. Requires Mg(2+) as cofactor. The cofactor is K(+).

The protein resides in the cytoplasm. It carries out the reaction L-methionine + ATP + H2O = S-adenosyl-L-methionine + phosphate + diphosphate. The protein operates within amino-acid biosynthesis; S-adenosyl-L-methionine biosynthesis; S-adenosyl-L-methionine from L-methionine: step 1/1. Catalyzes the formation of S-adenosylmethionine (AdoMet) from methionine and ATP. The overall synthetic reaction is composed of two sequential steps, AdoMet formation and the subsequent tripolyphosphate hydrolysis which occurs prior to release of AdoMet from the enzyme. This is S-adenosylmethionine synthase from Geobacter metallireducens (strain ATCC 53774 / DSM 7210 / GS-15).